A 439-amino-acid chain; its full sequence is Gnt-II system L-idonate transporter (439 aa).

Topologically, residues 1–11 (MPLIIIAAGVA) are periplasmic. Residues 12–34 (LLLILMIGFKVNGFIALVLVAAV) traverse the membrane as a helical segment. At 35 to 53 (VGFAEGMDAQAVLHSIQNG) the chain is on the cytoplasmic side. A helical membrane pass occupies residues 54-76 (IGSTLGGLAMILGFGAMLGKLIS). The Periplasmic segment spans residues 77–96 (DTGAAQRIATTLIATFGKKR). Residues 97–114 (VQWALVITGLVVGLAMFF) form a helical membrane-spanning segment. Over 115–118 (EVGF) the chain is Cytoplasmic. The chain crosses the membrane as a helical span at residues 119 to 141 (VLLLPLVFTIVASSGLPLLYVGV). Topologically, residues 142–170 (PMVAALSVTHCFLPPHPGPTAIATIFEAN) are periplasmic. A helical transmembrane segment spans residues 171–193 (LGTTLLYGFIITIPTVIVAGPLF). At 194–218 (SKLLTRFEKAPPEGLFNPHLFSEEE) the chain is on the cytoplasmic side. Residues 219–241 (MPSFWNSIFAAVIPVILMAIAAV) traverse the membrane as a helical segment. Topologically, residues 242 to 253 (CEITLPKTNTVR) are periplasmic. The helical transmembrane segment at 254–276 (LFFEFVGNPAVALFIAIVIAIFT) threads the bilayer. The Cytoplasmic portion of the chain corresponds to 277-290 (LGRRNGRTIEQIMD). Residues 291–310 (IIGDSIGAIAMIVFIIAGGG) form a helical membrane-spanning segment. Over 311–322 (AFKQVLVDSGVG) the chain is Periplasmic. A helical membrane pass occupies residues 323-345 (HYISHLMTGTTLSPLLMCWTVAA). Residues 346–348 (LLR) are Cytoplasmic-facing. A helical membrane pass occupies residues 349–371 (IALGSATVAAITTAGVVLPIINV). The Periplasmic segment spans residues 372 to 377 (THADPA). A helical transmembrane segment spans residues 378–400 (LMVLATGAGSVIASHVNDPGFWL). At 401–414 (FKGYFNLTVGETLR) the chain is on the cytoplasmic side. A helical membrane pass occupies residues 415–437 (TWTVMETLISIMGLLGVLAINAV). Residues 438–439 (LH) are Periplasmic-facing.

It belongs to the GntP permease family.

The protein resides in the cell inner membrane. It carries out the reaction L-idonate(in) + H(+)(in) = L-idonate(out) + H(+)(out). The enzyme catalyses D-gluconate(in) + H(+)(in) = D-gluconate(out) + H(+)(out). It catalyses the reaction 5-dehydro-D-gluconate(in) + H(+)(in) = 5-dehydro-D-gluconate(out) + H(+)(out). Its pathway is carbohydrate acid metabolism; L-idonate degradation. Its function is as follows. Transporter which is probably involved in L-idonate metabolism. Transports L-idonate from the periplasm across the inner membrane. Can also transport D-gluconate and 5-keto-D-gluconate. It has been reported that gluconate uptake probably occurs via a proton-symport mechanism in E.coli. This is Gnt-II system L-idonate transporter from Escherichia coli (strain K12).